The following is a 46-amino-acid chain: Large ribosomal subunit protein bL36 (46 aa).

It belongs to the bacterial ribosomal protein bL36 family.

In Serratia proteamaculans (strain 568), this protein is Large ribosomal subunit protein bL36.